A 455-amino-acid polypeptide reads, in one-letter code: Bifunctional protein GlmU (455 aa).

Positions 1–230 (MSNRFAVILA…VEETLGVNDR (230 aa)) are pyrophosphorylase. Residues 9–12 (LAAG), lysine 23, glutamine 73, and 78–79 (GT) contribute to the UDP-N-acetyl-alpha-D-glucosamine site. Aspartate 103 is a Mg(2+) binding site. Residues glycine 140, glutamate 155, asparagine 170, and asparagine 228 each contribute to the UDP-N-acetyl-alpha-D-glucosamine site. Asparagine 228 contacts Mg(2+). Residues 231 to 251 (VALAQAEQVMKRRINEAWMRK) form a linker region. Residues 252–455 (GVTFIDPEQT…KEHYVTKKNN (204 aa)) are N-acetyltransferase. The UDP-N-acetyl-alpha-D-glucosamine site is built by arginine 333 and lysine 351. Catalysis depends on histidine 363, which acts as the Proton acceptor. Residues tyrosine 366 and asparagine 377 each contribute to the UDP-N-acetyl-alpha-D-glucosamine site. Residues 386-387 (NY), alanine 423, and arginine 440 each bind acetyl-CoA.

In the N-terminal section; belongs to the N-acetylglucosamine-1-phosphate uridyltransferase family. This sequence in the C-terminal section; belongs to the transferase hexapeptide repeat family. Homotrimer. Requires Mg(2+) as cofactor.

Its subcellular location is the cytoplasm. It catalyses the reaction alpha-D-glucosamine 1-phosphate + acetyl-CoA = N-acetyl-alpha-D-glucosamine 1-phosphate + CoA + H(+). The catalysed reaction is N-acetyl-alpha-D-glucosamine 1-phosphate + UTP + H(+) = UDP-N-acetyl-alpha-D-glucosamine + diphosphate. It functions in the pathway nucleotide-sugar biosynthesis; UDP-N-acetyl-alpha-D-glucosamine biosynthesis; N-acetyl-alpha-D-glucosamine 1-phosphate from alpha-D-glucosamine 6-phosphate (route II): step 2/2. Its pathway is nucleotide-sugar biosynthesis; UDP-N-acetyl-alpha-D-glucosamine biosynthesis; UDP-N-acetyl-alpha-D-glucosamine from N-acetyl-alpha-D-glucosamine 1-phosphate: step 1/1. The protein operates within bacterial outer membrane biogenesis; LPS lipid A biosynthesis. Catalyzes the last two sequential reactions in the de novo biosynthetic pathway for UDP-N-acetylglucosamine (UDP-GlcNAc). The C-terminal domain catalyzes the transfer of acetyl group from acetyl coenzyme A to glucosamine-1-phosphate (GlcN-1-P) to produce N-acetylglucosamine-1-phosphate (GlcNAc-1-P), which is converted into UDP-GlcNAc by the transfer of uridine 5-monophosphate (from uridine 5-triphosphate), a reaction catalyzed by the N-terminal domain. The polypeptide is Bifunctional protein GlmU (Halalkalibacterium halodurans (strain ATCC BAA-125 / DSM 18197 / FERM 7344 / JCM 9153 / C-125) (Bacillus halodurans)).